The sequence spans 77 residues: Adipokinetic prohormone type 3 (77 aa).

A signal peptide spans 1 to 22 (MQVRAVLVLAVVALVAVATSRA). The residue at position 23 (Gln-23) is a Pyrrolidone carboxylic acid. At Trp-30 the chain carries Tryptophan amide.

This sequence belongs to the AKH/HRTH/RPCH family.

It is found in the secreted. In terms of biological role, this hormone, released from cells in the corpora cardiaca, causes release of diglycerides from the fat body and stimulation of muscles to use these diglycerides as an energy source during energy-demanding processes. The protein is Adipokinetic prohormone type 3 of Locusta migratoria (Migratory locust).